We begin with the raw amino-acid sequence, 303 residues long: Succinate--CoA ligase [ADP-forming] subunit alpha (303 aa).

CoA contacts are provided by residues 20–23, Lys46, and 108–110; these read TGSE and ITE. Tyr173 is a substrate binding site. His259 functions as the Tele-phosphohistidine intermediate in the catalytic mechanism.

It belongs to the succinate/malate CoA ligase alpha subunit family. Heterotetramer of two alpha and two beta subunits.

It catalyses the reaction succinate + ATP + CoA = succinyl-CoA + ADP + phosphate. It carries out the reaction GTP + succinate + CoA = succinyl-CoA + GDP + phosphate. It functions in the pathway carbohydrate metabolism; tricarboxylic acid cycle; succinate from succinyl-CoA (ligase route): step 1/1. In terms of biological role, succinyl-CoA synthetase functions in the citric acid cycle (TCA), coupling the hydrolysis of succinyl-CoA to the synthesis of either ATP or GTP and thus represents the only step of substrate-level phosphorylation in the TCA. The alpha subunit of the enzyme binds the substrates coenzyme A and phosphate, while succinate binding and nucleotide specificity is provided by the beta subunit. The polypeptide is Succinate--CoA ligase [ADP-forming] subunit alpha (Mycobacterium bovis (strain ATCC BAA-935 / AF2122/97)).